Here is a 327-residue protein sequence, read N- to C-terminus: GMP reductase (327 aa).

C176 acts as the Thioimidate intermediate in catalysis. 205 to 228 (IIADGGIRTHGDIAKSIRFGASMV) is an NADP(+) binding site.

It belongs to the IMPDH/GMPR family. GuaC type 2 subfamily.

The catalysed reaction is IMP + NH4(+) + NADP(+) = GMP + NADPH + 2 H(+). Its function is as follows. Catalyzes the irreversible NADPH-dependent deamination of GMP to IMP. It functions in the conversion of nucleobase, nucleoside and nucleotide derivatives of G to A nucleotides, and in maintaining the intracellular balance of A and G nucleotides. This chain is GMP reductase, found in Streptococcus pyogenes serotype M1.